A 433-amino-acid polypeptide reads, in one-letter code: MFTRLITTSALTGAIALTIGSQAFAQTELAWWHGMTGANNEMVNELSKEFNESQSEYKIVPVYKGNYPETLNAGIAAFRSKQPPAILQVFDAGSGVMMAAEGAIVPAAEVLEKGGYKFDKSQYLPGIVAYYSKPDGTMLSFPYNSSSPILYYNKDAFKKAGLDENKPPKTWPEVFEAAKKIKASGASPCGFTSTWLTWIQTENFAAWNNVPYGTNENGLAGTDVKLEINSPLYVEHFQAIADLAKDGTFRYGGRTSEAKQLFTSGECAMLTESSGGLGDVVKSGINYGIGQLPYYEGHGPQNTIPGGASLWVFAGLSDDQYKGIAEFFNFLSQSKIQVKLHEKSGYLPVTLAAYEETKKSDFYEKNPGRETPILQMMGKEPTENSKGVRLVNLPQVRDILNEEFEAMLGGKQDAKTALDNAVKRGNAAIAAAQ.

The N-terminal stretch at 1-25 is a signal peptide; the sequence is MFTRLITTSALTGAIALTIGSQAFA. Positions 67, 91, 146, 273, 307, 346, and 397 each coordinate sn-glycerol 3-phosphate.

The protein belongs to the bacterial solute-binding protein 1 family. In terms of assembly, the complex is composed of two ATP-binding proteins (UgpC), two transmembrane proteins (UgpA and UgpE) and a solute-binding protein (UgpB).

Its subcellular location is the periplasm. Its function is as follows. Part of the ABC transporter complex UgpBAEC involved in sn-glycerol-3-phosphate (G3P) import. Binds G3P. The sequence is that of sn-glycerol-3-phosphate-binding periplasmic protein UgpB (ugpB) from Brucella melitensis biotype 1 (strain ATCC 23456 / CCUG 17765 / NCTC 10094 / 16M).